The chain runs to 98 residues: Acylphosphatase-1 (98 aa).

In terms of domain architecture, Acylphosphatase-like spans 8-98 (SVDYEVFGKV…LEHSTFSICK (91 aa)). Residues R23 and N41 contribute to the active site.

This sequence belongs to the acylphosphatase family.

It carries out the reaction an acyl phosphate + H2O = a carboxylate + phosphate + H(+). The polypeptide is Acylphosphatase-1 (acyp1) (Xenopus tropicalis (Western clawed frog)).